The primary structure comprises 194 residues: ATP-dependent Clp protease proteolytic subunit (194 aa).

The Nucleophile role is filled by Ser-97. Residue His-122 is part of the active site.

The protein belongs to the peptidase S14 family. Fourteen ClpP subunits assemble into 2 heptameric rings which stack back to back to give a disk-like structure with a central cavity, resembling the structure of eukaryotic proteasomes.

Its subcellular location is the cytoplasm. It carries out the reaction Hydrolysis of proteins to small peptides in the presence of ATP and magnesium. alpha-casein is the usual test substrate. In the absence of ATP, only oligopeptides shorter than five residues are hydrolyzed (such as succinyl-Leu-Tyr-|-NHMec, and Leu-Tyr-Leu-|-Tyr-Trp, in which cleavage of the -Tyr-|-Leu- and -Tyr-|-Trp bonds also occurs).. Functionally, cleaves peptides in various proteins in a process that requires ATP hydrolysis. Has a chymotrypsin-like activity. Plays a major role in the degradation of misfolded proteins. In Campylobacter jejuni subsp. jejuni serotype O:23/36 (strain 81-176), this protein is ATP-dependent Clp protease proteolytic subunit.